A 30-amino-acid polypeptide reads, in one-letter code: Cyclotide hyen-D (30 aa).

A cross-link (cyclopeptide (Gly-Asn)) is located at residues 1–30 (GFPCGESCVYIPCFTAAIGCSCKSKVCYKN). 3 disulfides stabilise this stretch: C4–C20, C8–C22, and C13–C27.

Post-translationally, this is a cyclic peptide. As to expression, detected in stems (at protein level).

Functionally, probably participates in a plant defense mechanism. Has strong cytotoxic activity against HUVEC cells (LC(50)= 0.58 uM) and various cancer cells including HeLa (LC(50)= 0.48 uM), MCF-7 and K562. Also displays some hemolytic activity. Binds to and induces leakage in phospholipd membranes, particularly ones containing 1-palmitoyl-2-oleophosphatidylethanolamine (POPE). The polypeptide is Cyclotide hyen-D (Pigea enneasperma (Spade flower)).